The primary structure comprises 512 residues: D-alanine--D-alanyl carrier protein ligase (512 aa).

T152–S153 contacts ATP. D199 is a D-alanine binding site. N294 to T299 is an ATP binding site. V303 contributes to the D-alanine binding site. ATP contacts are provided by residues D385, Y397–R400, and K499. D-alanine is bound at residue K499.

The protein belongs to the ATP-dependent AMP-binding enzyme family. DltA subfamily.

The protein localises to the cytoplasm. It carries out the reaction holo-[D-alanyl-carrier protein] + D-alanine + ATP = D-alanyl-[D-alanyl-carrier protein] + AMP + diphosphate. It participates in cell wall biogenesis; lipoteichoic acid biosynthesis. Its function is as follows. Catalyzes the first step in the D-alanylation of lipoteichoic acid (LTA), the activation of D-alanine and its transfer onto the D-alanyl carrier protein (Dcp) DltC. In an ATP-dependent two-step reaction, forms a high energy D-alanyl-AMP intermediate, followed by transfer of the D-alanyl residue as a thiol ester to the phosphopantheinyl prosthetic group of the Dcp. D-alanylation of LTA plays an important role in modulating the properties of the cell wall in Gram-positive bacteria, influencing the net charge of the cell wall. The chain is D-alanine--D-alanyl carrier protein ligase from Streptococcus pyogenes serotype M28 (strain MGAS6180).